Here is a 141-residue protein sequence, read N- to C-terminus: Large ribosomal subunit protein uL11 (141 aa).

This sequence belongs to the universal ribosomal protein uL11 family. As to quaternary structure, part of the ribosomal stalk of the 50S ribosomal subunit. Interacts with L10 and the large rRNA to form the base of the stalk. L10 forms an elongated spine to which L12 dimers bind in a sequential fashion forming a multimeric L10(L12)X complex. One or more lysine residues are methylated.

Functionally, forms part of the ribosomal stalk which helps the ribosome interact with GTP-bound translation factors. This chain is Large ribosomal subunit protein uL11, found in Chlamydia trachomatis serovar L2 (strain ATCC VR-902B / DSM 19102 / 434/Bu).